The following is a 550-amino-acid chain: Arginine--tRNA ligase (550 aa).

The 'HIGH' region signature appears at 130–140 (ANPTGPIHIGG).

The protein belongs to the class-I aminoacyl-tRNA synthetase family. Monomer.

It is found in the cytoplasm. It catalyses the reaction tRNA(Arg) + L-arginine + ATP = L-arginyl-tRNA(Arg) + AMP + diphosphate. This is Arginine--tRNA ligase from Mycobacterium sp. (strain JLS).